A 310-amino-acid chain; its full sequence is N-acetyl-gamma-glutamyl-phosphate reductase (310 aa).

Cys117 is a catalytic residue.

This sequence belongs to the NAGSA dehydrogenase family. Type 2 subfamily.

It is found in the cytoplasm. It catalyses the reaction N-acetyl-L-glutamate 5-semialdehyde + phosphate + NADP(+) = N-acetyl-L-glutamyl 5-phosphate + NADPH + H(+). The protein operates within amino-acid biosynthesis; L-arginine biosynthesis; N(2)-acetyl-L-ornithine from L-glutamate: step 3/4. In terms of biological role, catalyzes the NADPH-dependent reduction of N-acetyl-5-glutamyl phosphate to yield N-acetyl-L-glutamate 5-semialdehyde. This chain is N-acetyl-gamma-glutamyl-phosphate reductase, found in Rhizobium etli (strain ATCC 51251 / DSM 11541 / JCM 21823 / NBRC 15573 / CFN 42).